The primary structure comprises 511 residues: Maturase K (511 aa).

It belongs to the intron maturase 2 family. MatK subfamily.

Its subcellular location is the plastid. It localises to the chloroplast. Functionally, usually encoded in the trnK tRNA gene intron. Probably assists in splicing its own and other chloroplast group II introns. The polypeptide is Maturase K (Acorus calamus var. americanus (American sweet flag)).